The following is a 293-amino-acid chain: Acetyl-coenzyme A carboxylase carboxyl transferase subunit beta (293 aa).

Residues 29–293 (LWRKCPRCEG…MGWPPLALDD (265 aa)) enclose the CoA carboxyltransferase N-terminal domain. Residues Cys-33, Cys-36, Cys-52, and Cys-55 each coordinate Zn(2+). The C4-type zinc-finger motif lies at 33–55 (CPRCEGVVYRPELDRNMDVCPKC).

This sequence belongs to the AccD/PCCB family. Acetyl-CoA carboxylase is a heterohexamer composed of biotin carboxyl carrier protein (AccB), biotin carboxylase (AccC) and two subunits each of ACCase subunit alpha (AccA) and ACCase subunit beta (AccD). Zn(2+) is required as a cofactor.

It localises to the cytoplasm. The catalysed reaction is N(6)-carboxybiotinyl-L-lysyl-[protein] + acetyl-CoA = N(6)-biotinyl-L-lysyl-[protein] + malonyl-CoA. It participates in lipid metabolism; malonyl-CoA biosynthesis; malonyl-CoA from acetyl-CoA: step 1/1. Functionally, component of the acetyl coenzyme A carboxylase (ACC) complex. Biotin carboxylase (BC) catalyzes the carboxylation of biotin on its carrier protein (BCCP) and then the CO(2) group is transferred by the transcarboxylase to acetyl-CoA to form malonyl-CoA. The sequence is that of Acetyl-coenzyme A carboxylase carboxyl transferase subunit beta from Alcanivorax borkumensis (strain ATCC 700651 / DSM 11573 / NCIMB 13689 / SK2).